The following is a 206-amino-acid chain: Somatotropin (206 aa).

An N-terminal signal peptide occupies residues 1–18 (MLDRVVVLLSVLCLGVSS). Q19 is subject to Pyrrolidone carboxylic acid. H37 lines the Zn(2+) pocket. A disulfide bridge connects residues C70 and C179. E188 lines the Zn(2+) pocket. A disulfide bond links C196 and C204.

It belongs to the somatotropin/prolactin family.

Its subcellular location is the secreted. Growth hormone plays an important role in growth control and is involved in the regulation of several anabolic processes. Implicated as an osmoregulatory substance important for seawater adaptation. The sequence is that of Somatotropin (gh) from Pseudocaranx dentex (White trevally).